The following is a 202-amino-acid chain: N-(5'-phosphoribosyl)anthranilate isomerase (202 aa).

The protein belongs to the TrpF family.

It catalyses the reaction N-(5-phospho-beta-D-ribosyl)anthranilate = 1-(2-carboxyphenylamino)-1-deoxy-D-ribulose 5-phosphate. Its pathway is amino-acid biosynthesis; L-tryptophan biosynthesis; L-tryptophan from chorismate: step 3/5. In Listeria monocytogenes serotype 4b (strain F2365), this protein is N-(5'-phosphoribosyl)anthranilate isomerase.